A 441-amino-acid chain; its full sequence is Trigger factor (441 aa).

Positions 175–260 (GDKVVIDYNS…LVSIMVPKDV (86 aa)) constitute a PPIase FKBP-type domain.

It belongs to the FKBP-type PPIase family. Tig subfamily.

Its subcellular location is the cytoplasm. The catalysed reaction is [protein]-peptidylproline (omega=180) = [protein]-peptidylproline (omega=0). Its function is as follows. Involved in protein export. Acts as a chaperone by maintaining the newly synthesized protein in an open conformation. Functions as a peptidyl-prolyl cis-trans isomerase. This is Trigger factor from Anaplasma marginale (strain St. Maries).